Here is a 312-residue protein sequence, read N- to C-terminus: L-type lectin-like domain-containing protein C126.08c (312 aa).

The first 22 residues, 1–22, serve as a signal peptide directing secretion; that stretch reads MFFSVKNVFLLGIFGFVLGALA. Residues 23 to 280 lie on the Extracellular side of the membrane; it reads ETSHLERLSL…QKKGSFKKRL (258 aa). One can recognise an L-type lectin-like domain in the interval 24-248; sequence TSHLERLSLE…EIASILSRTI (225 aa). Residues 281 to 301 traverse the membrane as a helical segment; it reads IILLLSLIVIFSIFALRSYQV. Topologically, residues 302 to 312 are cytoplasmic; the sequence is QQEKNRRTTVL.

Its subcellular location is the membrane. It is found in the endoplasmic reticulum. The protein resides in the golgi apparatus. It localises to the vacuole. This Schizosaccharomyces pombe (strain 972 / ATCC 24843) (Fission yeast) protein is L-type lectin-like domain-containing protein C126.08c.